The following is a 232-amino-acid chain: Orotidine 5'-phosphate decarboxylase (232 aa).

Substrate is bound by residues Asp-11, Lys-33, 60–69 (DLKFHDIPHT), Thr-119, Arg-180, Gln-189, Gly-209, and Arg-210. The Proton donor role is filled by Lys-62.

Belongs to the OMP decarboxylase family. Type 1 subfamily. In terms of assembly, homodimer.

The catalysed reaction is orotidine 5'-phosphate + H(+) = UMP + CO2. It participates in pyrimidine metabolism; UMP biosynthesis via de novo pathway; UMP from orotate: step 2/2. Functionally, catalyzes the decarboxylation of orotidine 5'-monophosphate (OMP) to uridine 5'-monophosphate (UMP). This chain is Orotidine 5'-phosphate decarboxylase, found in Nitrosococcus oceani (strain ATCC 19707 / BCRC 17464 / JCM 30415 / NCIMB 11848 / C-107).